The primary structure comprises 381 residues: Dual specificity protein phosphatase 6 (381 aa).

The Rhodanese domain occupies 30–148; the sequence is GNERLLLMDC…FQAEFALHCE (119 aa). Residues 176-203 are disordered; that stretch reads SSSDIESDLDRDPNSATDSDGSPLSNSQ. Positions 189-203 are enriched in polar residues; it reads NSATDSDGSPLSNSQ. Residues 206–349 form the Tyrosine-protein phosphatase domain; sequence FPVEILPFLY…LLDFERTLGL (144 aa). Cys293 acts as the Phosphocysteine intermediate in catalysis.

Belongs to the protein-tyrosine phosphatase family. Non-receptor class dual specificity subfamily. Interacts with MAPK1/ERK2. In terms of processing, ubiquitinated by the SCF(FBXO31) complex, leading to its proteasomal degradation.

It is found in the cytoplasm. The enzyme catalyses O-phospho-L-tyrosyl-[protein] + H2O = L-tyrosyl-[protein] + phosphate. It carries out the reaction O-phospho-L-seryl-[protein] + H2O = L-seryl-[protein] + phosphate. The catalysed reaction is O-phospho-L-threonyl-[protein] + H2O = L-threonyl-[protein] + phosphate. In terms of biological role, dual specificity protein phosphatase, which mediates dephosphorylation and inactivation of MAP kinases. Has a specificity for the ERK family. Plays an important role in alleviating acute postoperative pain. Necessary for the normal dephosphorylation of the long-lasting phosphorylated forms of spinal MAPK1/3 and MAP kinase p38 induced by peripheral surgery, which drives the resolution of acute postoperative allodynia. Also important for dephosphorylation of MAPK1/3 in local wound tissue, which further contributes to resolution of acute pain. The chain is Dual specificity protein phosphatase 6 (Dusp6) from Mus musculus (Mouse).